Consider the following 216-residue polypeptide: MAGRGGAARPNGPAAGNKICQFKLVLLGESAVGKSSLVLRFVKGQFHEYQESTIGAAFLTQTVCLDDTTVKFEIWDTAGQERYHSLAPMYYRGAQAAIVVYDITNTDTFARAKNWVKELQRQASPNIVIALAGNKADLASKRAVEFQEAQAYAEDNSLLFMETSAKTAMNVNEIFMAIAKKLPKNEPQNAAGAPGRNRGVDLQENNPASRSQCCSN.

GTP is bound by residues Ser-30, Ala-31, Gly-33, Lys-34, Ser-35, Ser-36, His-47, Glu-48, Thr-53, and Gly-79. Mg(2+) is bound at residue Ser-35. 2 consecutive short sequence motifs (switch) follow at residues Gln-45–Ala-57 and Ala-78–Ala-94. Thr-53 is a binding site for Mg(2+). Ser-85 is modified (phosphoserine). GTP contacts are provided by Asn-134, Lys-135, Asp-137, Ala-165, and Lys-166. The interval Asn-185–Asn-216 is disordered. A compositionally biased stretch (polar residues) spans Gln-203–Asn-216. S-geranylgeranyl cysteine attachment occurs at residues Cys-213 and Cys-214.

It belongs to the small GTPase superfamily. Rab family. In terms of assembly, interacts with EEA1 and INCA1. Interacts with GDI1, GDI2, CHML and CHM; phosphorylation at Ser-85 disrupts this interaction. It depends on Mg(2+) as a cofactor. In terms of processing, phosphorylation of Ser-85 in the switch II region by LRRK2 prevents the association of RAB regulatory proteins, including CHM, CHML and RAB GDP dissociation inhibitors GDI1 and GDI2.

The protein resides in the cell membrane. It is found in the early endosome membrane. It localises to the melanosome. It carries out the reaction GTP + H2O = GDP + phosphate + H(+). With respect to regulation, regulated by guanine nucleotide exchange factors (GEFs) which promote the exchange of bound GDP for free GTP. Regulated by GTPase activating proteins (GAPs) which increase the GTP hydrolysis activity. Inhibited by GDP dissociation inhibitors (GDIs). In terms of biological role, the small GTPases Rab are key regulators of intracellular membrane trafficking, from the formation of transport vesicles to their fusion with membranes. Rabs cycle between an inactive GDP-bound form and an active GTP-bound form that is able to recruit to membranes different sets of downstream effectors directly responsible for vesicle formation, movement, tethering and fusion. The chain is Ras-related protein Rab-5C (RAB5C) from Bos taurus (Bovine).